A 585-amino-acid polypeptide reads, in one-letter code: Mitochondrial sodium/calcium exchanger protein (585 aa).

The first 26 residues, 1-26 (MAGRWLDPLWAPGFLCVALILETASG), serve as a signal peptide directing secretion. At 27 to 95 (AGDLSTKAHG…GIFCYFPPNL (69 aa)) the chain is on the extracellular side. A glycan (N-linked (GlcNAc...) asparagine) is linked at Asn46. The helical transmembrane segment at 96–116 (LPLAITLYVFWLLYLFLILGV) threads the bilayer. The Cytoplasmic segment spans residues 117–140 (TAAKFFCPNLSAISTSLKLSHNVA). A helical transmembrane segment spans residues 141–161 (GVTFLAFGNGAPDIFSALVAF). Residues 162–168 (SDPRTAG) are Extracellular-facing. A helical transmembrane segment spans residues 169 to 189 (LAIGALFGAGVLVTTVVAGGI). The Cytoplasmic portion of the chain corresponds to 190–205 (TILRPFMAASRPFLRD). Residues 206–226 (ITFYMVAVFLTFTALYLGRIT) form a helical membrane-spanning segment. Position 227 (Leu227) is a topological domain, extracellular. A helical transmembrane segment spans residues 228 to 247 (VWALGYLGLYVFYVVTVIIC). At 248–325 (TWVYQRQRSR…KWRTQSISCK (78 aa)) the chain is on the cytoplasmic side. Ser258 carries the phosphoserine; by PKA modification. The helical transmembrane segment at 326-346 (LLKVAKLPVEFLLLLTVPVVD) threads the bilayer. The Extracellular segment spans residues 347-360 (PDKDDRNWKRPLNC). Residues 361–381 (LQLVISPLVLVLTLQSGVYGI) traverse the membrane as a helical segment. The Cytoplasmic portion of the chain corresponds to 382–383 (YE). Residues 384–404 (IGGLLPVWAVVVIVGTALASV) form a helical membrane-spanning segment. Residues 405-416 (TFFATSNSEPPR) are Extracellular-facing. A helical membrane pass occupies residues 417-437 (LHWLFAFLGFLTSALWINAAA). The Cytoplasmic segment spans residues 438 to 445 (TEVVNILR). A helical membrane pass occupies residues 446-466 (SLGVVFRLSNTVLGLTLLAWG). The Extracellular portion of the chain corresponds to 467–491 (NSIGDAFSDFTLARQGYPRMAFSAC). Residues 492–512 (FGGIIFNILVGVGLGCLLQIV) form a helical membrane-spanning segment. Residues 513-525 (RSHASEVKLEPDG) are Cytoplasmic-facing. The helical transmembrane segment at 526–546 (LLVWVLASALGLSLVFSLVSV) threads the bilayer. Residues 547–559 (PLQCFQLSKAYGL) lie on the Extracellular side of the membrane. Residues 560 to 580 (CLLLFYICFIVVVLLTEFGVI) form a helical membrane-spanning segment. Residues 581 to 585 (HLKAD) are Cytoplasmic-facing.

Belongs to the Ca(2+):cation antiporter (CaCA) (TC 2.A.19) family. SLC24A subfamily. In terms of processing, phosphorylation at Ser-258 by PKA prevents calcium overload. As to expression, widely expressed. Present at higher level in pancreas, stomach, skeletal muscle and skin (at protein level). Ubiquitously expressed.

The protein resides in the mitochondrion inner membrane. It carries out the reaction Ca(2+)(in) + 3 Na(+)(out) = Ca(2+)(out) + 3 Na(+)(in). It catalyses the reaction 3 Li(+)(out) + Ca(2+)(in) = 3 Li(+)(in) + Ca(2+)(out). Inhibited by the sodium/calcium exchanger inhibitor CGP-37157. Strongly inhibited by zinc. Functionally, mitochondrial sodium/calcium antiporter that mediates sodium-dependent calcium efflux from mitochondrion, by mediating the exchange of 3 sodium ions per 1 calcium ion. Plays a central role in mitochondrial calcium homeostasis by mediating mitochondrial calcium extrusion: calcium efflux is essential for mitochondrial function and cell survival, notably in cardiomyocytes. Regulates rates of glucose-dependent insulin secretion in pancreatic beta-cells during the first phase of insulin secretion: acts by mediating efflux of calcium from mitochondrion, thereby affecting cytoplasmic calcium responses. Required for store-operated Ca(2+) entry (SOCE) and Ca(2+) release-activated Ca(2+) (CRAC) channel regulation: sodium transport by SLC8B1 leads to promote calcium-shuttling that modulates mitochondrial redox status, thereby regulating SOCE activity. Involved in B-lymphocyte chemotaxis. Able to transport Ca(2+) in exchange of either Li(+) or Na(+), explaining how Li(+) catalyzes Ca(2+) exchange. In contrast to other members of the family its function is independent of K(+). This Rattus norvegicus (Rat) protein is Mitochondrial sodium/calcium exchanger protein.